Consider the following 136-residue polypeptide: Immunoglobulin J chain (136 aa).

Disulfide bonds link Cys-12–Cys-100, Cys-71–Cys-91, and Cys-108–Cys-133. N-linked (GlcNAc...) (complex) asparagine glycosylation is present at Asn-48.

In terms of assembly, part of the secretory IgA (sIgA) complex that consists of two, four or five IgA monomers, and two additional non-Ig polypeptides, namely the JCHAIN and the secretory component (the proteolytic product of PIGR). Part of the secretory IgM (sIgM) complex that consist of five IgM monomers, and two additional non-Ig polypeptides, namely the JCHAIN and the secretory component (the proteolytic product of PIGR). JCHAIN-containing IgM interacts (via CH4 domain) with FCRM (via Ig-like domain).

Its subcellular location is the secreted. Its function is as follows. Serves to link two monomer units of either IgM or IgA. In the case of IgM, the J chain-joined dimer is a nucleating unit for the IgM pentamer, and in the case of IgA it induces dimers and/or larger polymers. It also helps to bind these immunoglobulins to secretory component. This is Immunoglobulin J chain from Oryctolagus cuniculus (Rabbit).